We begin with the raw amino-acid sequence, 286 residues long: Ribonuclease H1 (286 aa).

The segment covering 101 to 115 (EPLDGDGHESAEPYA) has biased composition (basic and acidic residues). The interval 101–127 (EPLDGDGHESAEPYAKHMKPSVEPAPP) is disordered. The region spanning 136 to 282 (MGDFVVVYTD…ADRLAREGAK (147 aa)) is the RNase H type-1 domain. Aspartate 145, glutamate 186, aspartate 210, and aspartate 274 together coordinate Mg(2+).

Belongs to the RNase H family. In terms of assembly, monomer. The cofactor is Mg(2+). In terms of tissue distribution, ubiquitous.

It localises to the cytoplasm. The catalysed reaction is Endonucleolytic cleavage to 5'-phosphomonoester.. In the presence of magnesium, manganese is inhibitory. Its function is as follows. Endonuclease that specifically degrades the RNA of RNA-DNA hybrids. Plays a role in RNA polymerase II (RNAp II) transcription termination by degrading R-loop RNA-DNA hybrid formation at G-rich pause sites located downstream of the poly(A) site and behind the elongating RNAp II. This is Ribonuclease H1 (RNASEH1) from Homo sapiens (Human).